A 235-amino-acid chain; its full sequence is Phosphoribosylaminoimidazole-succinocarboxamide synthase (235 aa).

The protein belongs to the SAICAR synthetase family.

It catalyses the reaction 5-amino-1-(5-phospho-D-ribosyl)imidazole-4-carboxylate + L-aspartate + ATP = (2S)-2-[5-amino-1-(5-phospho-beta-D-ribosyl)imidazole-4-carboxamido]succinate + ADP + phosphate + 2 H(+). The protein operates within purine metabolism; IMP biosynthesis via de novo pathway; 5-amino-1-(5-phospho-D-ribosyl)imidazole-4-carboxamide from 5-amino-1-(5-phospho-D-ribosyl)imidazole-4-carboxylate: step 1/2. The chain is Phosphoribosylaminoimidazole-succinocarboxamide synthase from Clostridium beijerinckii (strain ATCC 51743 / NCIMB 8052) (Clostridium acetobutylicum).